We begin with the raw amino-acid sequence, 252 residues long: Protein A47 (252 aa).

This sequence belongs to the orthopoxvirus A47 protein family.

This chain is Protein A47, found in Vaccinia virus (strain Western Reserve) (VACV).